We begin with the raw amino-acid sequence, 1643 residues long: DNA-directed RNA polymerase subunit beta' (1643 aa).

Cysteine 64, cysteine 66, cysteine 79, and cysteine 82 together coordinate Zn(2+). Positions 684, 686, and 688 each coordinate Mg(2+). Positions 1046, 1239, 1246, and 1249 each coordinate Zn(2+).

This sequence belongs to the RNA polymerase beta' chain family. The RNAP catalytic core consists of 2 alpha, 1 beta, 1 beta' and 1 omega subunit. When a sigma factor is associated with the core the holoenzyme is formed, which can initiate transcription. It depends on Mg(2+) as a cofactor. Zn(2+) serves as cofactor.

It catalyses the reaction RNA(n) + a ribonucleoside 5'-triphosphate = RNA(n+1) + diphosphate. Its function is as follows. DNA-dependent RNA polymerase catalyzes the transcription of DNA into RNA using the four ribonucleoside triphosphates as substrates. In Petrotoga mobilis (strain DSM 10674 / SJ95), this protein is DNA-directed RNA polymerase subunit beta'.